We begin with the raw amino-acid sequence, 226 residues long: Small ribosomal subunit protein uS5 (226 aa).

The segment covering 1–18 (MAAPQRSRTTGAPSSGGP) has biased composition (polar residues). Positions 1-45 (MAAPQRSRTTGAPSSGGPSENERGRGGDRRGGDRRGGDRRGGDDR) are disordered. Residues 20–45 (ENERGRGGDRRGGDRRGGDRRGGDDR) show a composition bias toward basic and acidic residues. Residues 48-111 (FVERVVTINR…EEAKKNFFRV (64 aa)) form the S5 DRBM domain.

Belongs to the universal ribosomal protein uS5 family. In terms of assembly, part of the 30S ribosomal subunit. Contacts proteins S4 and S8.

With S4 and S12 plays an important role in translational accuracy. Its function is as follows. Located at the back of the 30S subunit body where it stabilizes the conformation of the head with respect to the body. The chain is Small ribosomal subunit protein uS5 from Beutenbergia cavernae (strain ATCC BAA-8 / DSM 12333 / CCUG 43141 / JCM 11478 / NBRC 16432 / NCIMB 13614 / HKI 0122).